Consider the following 142-residue polypeptide: Centromere protein S (142 aa).

A disordered region spans residues 107 to 142 (LKGKAKKKRKPEDESRSSRESMAEELDGAEELQSES). Residues 116–128 (KPEDESRSSRESM) show a composition bias toward basic and acidic residues. The span at 129-142 (AEELDGAEELQSES) shows a compositional bias: acidic residues.

It belongs to the TAF9 family. CENP-S/MHF1 subfamily. In terms of assembly, heterodimer with CENPX, sometimes called MHF; this interaction stabilizes both partners. MHF heterodimers can assemble to form tetrameric structures. MHF also coassemble with CENPT-CENPW heterodimers at centromeres to form the tetrameric CENP-T-W-S-X complex. Forms a discrete complex with FANCM and CENPX, called FANCM-MHF; this interaction, probably mediated by direct binding between CENPS and FANCM, leads to synergistic activation of double-stranded DNA binding and strongly stimulates FANCM-mediated DNA remodeling. Recruited by FANCM to the Fanconi anemia (FA) core complex, which consists of CENPS, CENPX, FANCA, FANCB, FANCC, FANCE, FANCF, FANCG, FANCL, FANCM, FAAP24 and FAAP100. The FA core complex associates with Bloom syndrome (BLM) complex, which consists of at least BLM, DNA topoisomerase 3-alpha (TOP3A), RMI1/BLAP75, RPA1/RPA70 and RPA2/RPA32. The super complex between FA and BLM is called BRAFT. Component of the CENPA-CAD complex, composed of CENPI, CENPK, CENPL, CENPO, CENPP, CENPQ, CENPR and CENPS. The CENPA-CAD complex is probably recruited on centromeres by the CENPA-NAC complex, at least composed of CENPA, CENPC, CENPH, CENPM, CENPN, CENPT and CENPU.

It is found in the nucleus. Its subcellular location is the chromosome. The protein localises to the centromere. The protein resides in the kinetochore. In terms of biological role, DNA-binding component of the Fanconi anemia (FA) core complex. Required for the normal activation of the FA pathway, leading to monoubiquitination of the FANCI-FANCD2 complex in response to DNA damage, cellular resistance to DNA cross-linking drugs, and prevention of chromosomal breakage. In complex with CENPX (MHF heterodimer), crucial cofactor for FANCM in both binding and ATP-dependent remodeling of DNA. Stabilizes FANCM. In complex with CENPX and FANCM (but not other FANC proteins), rapidly recruited to blocked forks and promotes gene conversion at blocked replication forks. In complex with CENPT, CENPW and CENPX (CENP-T-W-S-X heterotetramer), involved in the formation of a functional kinetochore outer plate, which is essential for kinetochore-microtubule attachment and faithful mitotic progression. As a component of MHF and CENP-T-W-S-X complexes, binds DNA and bends it to form a nucleosome-like structure. DNA-binding function is fulfilled in the presence of CENPX, with the following preference for DNA substates: Holliday junction &gt; double-stranded &gt; splay arm &gt; single-stranded. Does not bind DNA on its own. This is Centromere protein S (Cenps) from Mus musculus (Mouse).